The chain runs to 518 residues: Serine/threonine-protein kinase PRR1 (518 aa).

An N-acetylmethionine modification is found at methionine 1. The span at 1–12 (MDEYSSIYSQPK) shows a compositional bias: polar residues. The disordered stretch occupies residues 1–59 (MDEYSSIYSQPKTPRLKQEGFPDSIGDQHEKALIDENGEEDKKMASTEGTTGDSRSTPL). Residues 16–45 (LKQEGFPDSIGDQHEKALIDENGEEDKKMA) are compositionally biased toward basic and acidic residues. Positions 47–59 (TEGTTGDSRSTPL) are enriched in polar residues. Serine 132 is modified (phosphoserine). The Protein kinase domain occupies 192-508 (WKKVRPIGSG…INEIYESPFV (317 aa)). ATP-binding positions include 198–206 (IGSGNFSTV) and lysine 225. Catalysis depends on aspartate 354, which acts as the Proton acceptor.

It belongs to the protein kinase superfamily. CAMK Ser/Thr protein kinase family. NIM1 subfamily.

It is found in the cytoplasm. The enzyme catalyses L-seryl-[protein] + ATP = O-phospho-L-seryl-[protein] + ADP + H(+). The catalysed reaction is L-threonyl-[protein] + ATP = O-phospho-L-threonyl-[protein] + ADP + H(+). In terms of biological role, protein kinase that functions as a regulator in the pheromone-induced mating pathway downstream of mitogen-activated protein kinase (MAPK) FUS3. Diminishes transcriptional induction of genes in response to pheromone signaling. This chain is Serine/threonine-protein kinase PRR1 (PRR1), found in Saccharomyces cerevisiae (strain ATCC 204508 / S288c) (Baker's yeast).